The chain runs to 415 residues: Gamma-glutamyl phosphate reductase (415 aa).

Belongs to the gamma-glutamyl phosphate reductase family.

The protein localises to the cytoplasm. It carries out the reaction L-glutamate 5-semialdehyde + phosphate + NADP(+) = L-glutamyl 5-phosphate + NADPH + H(+). Its pathway is amino-acid biosynthesis; L-proline biosynthesis; L-glutamate 5-semialdehyde from L-glutamate: step 2/2. Functionally, catalyzes the NADPH-dependent reduction of L-glutamate 5-phosphate into L-glutamate 5-semialdehyde and phosphate. The product spontaneously undergoes cyclization to form 1-pyrroline-5-carboxylate. The chain is Gamma-glutamyl phosphate reductase from Carboxydothermus hydrogenoformans (strain ATCC BAA-161 / DSM 6008 / Z-2901).